Here is a 145-residue protein sequence, read N- to C-terminus: Basic phospholipase A2 GL1-1 (145 aa).

The first 21 residues, 1 to 21 (MYPAHLLVLLAVCVSLLGASA), serve as a signal peptide directing secretion. The propeptide occupies 22–27 (IPPLPL). Intrachain disulfides connect Cys-38–Cys-98, Cys-54–Cys-144, Cys-56–Cys-72, Cys-71–Cys-125, Cys-78–Cys-118, Cys-87–Cys-111, and Cys-105–Cys-116. Positions 55, 57, and 59 each coordinate Ca(2+). His-75 is an active-site residue. Asp-76 serves as a coordination point for Ca(2+). Residue Asp-119 is part of the active site.

It belongs to the phospholipase A2 family. Group I subfamily. D49 sub-subfamily. The cofactor is Ca(2+). Expressed by the venom gland.

The protein localises to the secreted. It carries out the reaction a 1,2-diacyl-sn-glycero-3-phosphocholine + H2O = a 1-acyl-sn-glycero-3-phosphocholine + a fatty acid + H(+). In terms of biological role, PLA2 catalyzes the calcium-dependent hydrolysis of the 2-acyl groups in 3-sn-phosphoglycerides. The sequence is that of Basic phospholipase A2 GL1-1 from Laticauda semifasciata (Black-banded sea krait).